A 1449-amino-acid polypeptide reads, in one-letter code: Gag-Pol polyprotein (1449 aa).

Residue glycine 2 is the site of N-myristoyl glycine; by host attachment. The Nuclear export signal motif lies at 16 to 22 (LEKVRLR). The Nuclear localization signal motif lies at 26 to 32 (KKKYMLK). The interval 215–237 (DLQHPQPGPLPAGQLREPRGSDI) is disordered. CCHC-type zinc fingers lie at residues 392-409 (IKCW…QCRA) and 413-430 (QGCW…KCPE). Residues 442 to 494 (GKEAPQFPHGPDASGADTNCSPRGSSCGSTEELHEDGQKAEGEQRETLQGGDR) are disordered. Polar residues predominate over residues 457–470 (ADTNCSPRGSSCGS). Basic and acidic residues predominate over residues 472 to 487 (EELHEDGQKAEGEQRE). The 70-residue stretch at 518–587 (VEVLLDTGAD…TPINIFGRNL (70 aa)) folds into the Peptidase A2 domain. Aspartate 523 (for protease activity; shared with dimeric partner) is an active-site residue. The region spanning 641 to 831 (DGQLEEAPPT…PPFQWMGYEL (191 aa)) is the Reverse transcriptase domain. The Mg(2+) site is built by aspartate 707, aspartate 782, and aspartate 783. The segment at 824 to 832 (FQWMGYELW) is RT 'primer grip'. A Tryptophan repeat motif motif is present at residues 994–1010 (WEQWWTDYWQVTWIPDW). Residues 1030 to 1153 (IQGAETFYVD…VDHLVSQGIR (124 aa)) enclose the RNase H type-1 domain. The Mg(2+) site is built by aspartate 1039, glutamate 1074, aspartate 1094, and aspartate 1145. The segment at 1159 to 1200 (KKIEPAQEEHEKYHSNVKELVFKFGLPRLVAKQIVDTCDKCH) adopts an Integrase-type zinc-finger fold. Histidine 1168, histidine 1172, cysteine 1196, and cysteine 1199 together coordinate Zn(2+). Residues 1210 to 1360 (VNAELGTWQM…TPAERLVNMI (151 aa)) enclose the Integrase catalytic domain. Mg(2+) contacts are provided by aspartate 1220 and aspartate 1272. The integrase-type DNA-binding region spans 1379 to 1426 (FRVYYREGRDQLWKGPGELLWKGEGAVILKVGTEIKVVPRRKAKIIKD).

As to quaternary structure, homotrimer. Interacts with gp41 (via C-terminus). Homodimer. The active site consists of two apposed aspartic acid residues. In terms of assembly, heterodimer of p66 RT and p51 RT (RT p66/p51). Heterodimerization of RT is essential for DNA polymerase activity. Despite the sequence identities, p66 RT and p51 RT have distinct folding. As to quaternary structure, homotetramer; may further associate as a homohexadecamer. Mg(2+) is required as a cofactor. Post-translationally, specific enzymatic cleavages by the viral protease yield mature proteins. The protease is released by autocatalytic cleavage. The polyprotein is cleaved during and after budding, this process is termed maturation. Proteolytic cleavage of p66 RT removes the RNase H domain to yield the p51 RT subunit. In terms of processing, capsid protein p24 is phosphorylated.

The protein localises to the virion. It is found in the host nucleus. Its subcellular location is the host cytoplasm. It localises to the host cell membrane. The catalysed reaction is Specific for a P1 residue that is hydrophobic, and P1' variable, but often Pro.. It catalyses the reaction Endohydrolysis of RNA in RNA/DNA hybrids. Three different cleavage modes: 1. sequence-specific internal cleavage of RNA. Human immunodeficiency virus type 1 and Moloney murine leukemia virus enzymes prefer to cleave the RNA strand one nucleotide away from the RNA-DNA junction. 2. RNA 5'-end directed cleavage 13-19 nucleotides from the RNA end. 3. DNA 3'-end directed cleavage 15-20 nucleotides away from the primer terminus.. It carries out the reaction 3'-end directed exonucleolytic cleavage of viral RNA-DNA hybrid.. The enzyme catalyses DNA(n) + a 2'-deoxyribonucleoside 5'-triphosphate = DNA(n+1) + diphosphate. With respect to regulation, the viral protease is inhibited by many synthetic protease inhibitors (PIs), such as amprenavir, atazanavir, indinavir, loprinavir, nelfinavir, ritonavir and saquinavir. RT can be inhibited either by nucleoside RT inhibitors (NRTIs) or by non nucleoside RT inhibitors (NNRTIs). NRTIs act as chain terminators, whereas NNRTIs inhibit DNA polymerization by binding a small hydrophobic pocket near the RT active site and inducing an allosteric change in this region. Classical NRTIs are abacavir, adefovir (PMEA), didanosine (ddI), lamivudine (3TC), stavudine (d4T), tenofovir (PMPA), zalcitabine (ddC), and zidovudine (AZT). Classical NNRTIs are atevirdine (BHAP U-87201E), delavirdine, efavirenz (DMP-266), emivirine (I-EBU), and nevirapine (BI-RG-587). The tritherapies used as a basic effective treatment of AIDS associate two NRTIs and one NNRTI. Use of protease inhibitors in tritherapy regimens permit more ambitious therapeutic strategies. Functionally, gag-Pol polyprotein and Gag polyprotein may regulate their own translation, by the binding genomic RNA in the 5'-UTR. At low concentration, Gag-Pol and Gag would promote translation, whereas at high concentration, the polyproteins encapsidate genomic RNA and then shut off translation. In terms of biological role, matrix protein p17 has two main functions: in infected cell, it targets Gag and Gag-pol polyproteins to the plasma membrane via a multipartite membrane-binding signal, that includes its myristointegration complex. The myristoylation signal and the NLS exert conflicting influences its subcellular localization. The key regulation of these motifs might be phosphorylation of a portion of MA molecules on the C-terminal tyrosine at the time of virus maturation, by virion-associated cellular tyrosine kinase. Implicated in the release from host cell mediated by Vpu. Capsid protein p24 forms the conical core that encapsulates the genomic RNA-nucleocapsid complex in the virion. The core is constituted by capsid protein hexamer subunits. The core is disassembled soon after virion entry. Interaction with host PPIA/CYPA protects the virus from restriction by host TRIM5-alpha and from an unknown antiviral activity in host cells. This capsid restriction by TRIM5 is one of the factors which restricts SIV to the simian species. Its function is as follows. Nucleocapsid protein p7 encapsulates and protects viral dimeric unspliced (genomic) RNA. Binds these RNAs through its zinc fingers. Facilitates rearangement of nucleic acid secondary structure during retrotranscription of genomic RNA. This capability is referred to as nucleic acid chaperone activity. Functionally, the aspartyl protease mediates proteolytic cleavages of Gag and Gag-Pol polyproteins during or shortly after the release of the virion from the plasma membrane. Cleavages take place as an ordered, step-wise cascade to yield mature proteins. This process is called maturation. Displays maximal activity during the budding process just prior to particle release from the cell. Also cleaves Nef and Vif, probably concomitantly with viral structural proteins on maturation of virus particles. Hydrolyzes host EIF4GI and PABP1 in order to shut off the capped cellular mRNA translation. The resulting inhibition of cellular protein synthesis serves to ensure maximal viral gene expression and to evade host immune response. In terms of biological role, reverse transcriptase/ribonuclease H (RT) is a multifunctional enzyme that converts the viral dimeric RNA genome into dsDNA in the cytoplasm, shortly after virus entry into the cell. This enzyme displays a DNA polymerase activity that can copy either DNA or RNA templates, and a ribonuclease H (RNase H) activity that cleaves the RNA strand of RNA-DNA heteroduplexes in a partially processive 3' to 5' endonucleasic mode. Conversion of viral genomic RNA into dsDNA requires many steps. A tRNA binds to the primer-binding site (PBS) situated at the 5'-end of the viral RNA. RT uses the 3' end of the tRNA primer to perform a short round of RNA-dependent minus-strand DNA synthesis. The reading proceeds through the U5 region and ends after the repeated (R) region which is present at both ends of viral RNA. The portion of the RNA-DNA heteroduplex is digested by the RNase H, resulting in a ssDNA product attached to the tRNA primer. This ssDNA/tRNA hybridizes with the identical R region situated at the 3' end of viral RNA. This template exchange, known as minus-strand DNA strong stop transfer, can be either intra- or intermolecular. RT uses the 3' end of this newly synthesized short ssDNA to perform the RNA-dependent minus-strand DNA synthesis of the whole template. RNase H digests the RNA template except for two polypurine tracts (PPTs) situated at the 5'-end and near the center of the genome. It is not clear if both polymerase and RNase H activities are simultaneous. RNase H can probably proceed both in a polymerase-dependent (RNA cut into small fragments by the same RT performing DNA synthesis) and a polymerase-independent mode (cleavage of remaining RNA fragments by free RTs). Secondly, RT performs DNA-directed plus-strand DNA synthesis using the PPTs that have not been removed by RNase H as primers. PPTs and tRNA primers are then removed by RNase H. The 3' and 5' ssDNA PBS regions hybridize to form a circular dsDNA intermediate. Strand displacement synthesis by RT to the PBS and PPT ends produces a blunt ended, linear dsDNA copy of the viral genome that includes long terminal repeats (LTRs) at both ends. Integrase catalyzes viral DNA integration into the host chromosome, by performing a series of DNA cutting and joining reactions. This enzyme activity takes place after virion entry into a cell and reverse transcription of the RNA genome in dsDNA. The first step in the integration process is 3' processing. This step requires a complex comprising the viral genome, matrix protein, Vpr and integrase. This complex is called the pre-integration complex (PIC). The integrase protein removes 2 nucleotides from each 3' end of the viral DNA, leaving recessed CA OH's at the 3' ends. In the second step, the PIC enters cell nucleus. This process is mediated through integrase and Vpr proteins, and allows the virus to infect a non dividing cell. This ability to enter the nucleus is specific of lentiviruses, other retroviruses cannot and rely on cell division to access cell chromosomes. In the third step, termed strand transfer, the integrase protein joins the previously processed 3' ends to the 5' ends of strands of target cellular DNA at the site of integration. The 5'-ends are produced by integrase-catalyzed staggered cuts, 5 bp apart. A Y-shaped, gapped, recombination intermediate results, with the 5'-ends of the viral DNA strands and the 3' ends of target DNA strands remaining unjoined, flanking a gap of 5 bp. The last step is viral DNA integration into host chromosome. This involves host DNA repair synthesis in which the 5 bp gaps between the unjoined strands are filled in and then ligated. Since this process occurs at both cuts flanking the SIV genome, a 5 bp duplication of host DNA is produced at the ends of SIV integration. Alternatively, Integrase may catalyze the excision of viral DNA just after strand transfer, this is termed disintegration. This Cercopithecidae (Old World monkeys) protein is Gag-Pol polyprotein (gag-pol).